Here is a 633-residue protein sequence, read N- to C-terminus: Pescadillo homolog (633 aa).

Positions 321 to 414 (RLRTLFKGLK…QLLPTNKYFL (94 aa)) constitute a BRCT domain. 2 disordered regions span residues 450–470 (HAQSEDESEDDAAAEEEDTVE) and 490–567 (KKYG…LQAR). Phosphoserine is present on residues Ser-453 and Ser-457. 2 stretches are compositionally biased toward acidic residues: residues 454–470 (EDESEDDAAAEEEDTVE) and 498–526 (VNEDEEDSDEEDFDGEEQESDDDDEEELD). Over residues 527–538 (EKEKRLLEEKQK) the composition is skewed to basic and acidic residues. Over residues 545-554 (KVHKVNKRQV) the composition is skewed to basic residues. Basic and acidic residues predominate over residues 555–564 (HKAEVDEHRL). The stretch at 593–626 (LLRKKRRTIETDAKEAKKLAKREARKAAAAAAAA) forms a coiled coil.

This sequence belongs to the pescadillo family.

The protein localises to the nucleus. It localises to the nucleolus. The protein resides in the nucleoplasm. Required for maturation of ribosomal RNAs and formation of the large ribosomal subunit. The sequence is that of Pescadillo homolog from Drosophila virilis (Fruit fly).